The sequence spans 1020 residues: Glycine dehydrogenase (decarboxylating), mitochondrial (1020 aa).

A mitochondrion-targeting transit peptide spans 1-35; the sequence is MQSCARAWGLRLGRGVGGGRRLAGGSGPCWAPRSR. Residues 21 to 46 form a disordered region; the sequence is RLAGGSGPCWAPRSRDSSSGGGDSAA. N6-acetyllysine is present on residues Lys-447, Lys-514, Lys-648, and Lys-664. Lys-754 is modified (N6-(pyridoxal phosphate)lysine).

This sequence belongs to the GcvP family. Homodimer. Interacts with GCSH. The glycine cleavage system is composed of four proteins: P (GLDC), T (GCST), L (DLD) and H (GCSH). The cofactor is pyridoxal 5'-phosphate.

It is found in the mitochondrion. The enzyme catalyses N(6)-[(R)-lipoyl]-L-lysyl-[glycine-cleavage complex H protein] + glycine + H(+) = N(6)-[(R)-S(8)-aminomethyldihydrolipoyl]-L-lysyl-[glycine-cleavage complex H protein] + CO2. With respect to regulation, stimulated by lipoic acid. Inhibited in presence of methylamine. The glycine cleavage system catalyzes the degradation of glycine. The P protein (GLDC) binds the alpha-amino group of glycine through its pyridoxal phosphate cofactor; CO(2) is released and the remaining methylamine moiety is then transferred to the lipoamide cofactor of the H protein (GCSH). This chain is Glycine dehydrogenase (decarboxylating), mitochondrial, found in Homo sapiens (Human).